A 1370-amino-acid chain; its full sequence is Zinc finger MYM-type protein 3 (1370 aa).

3 stretches are compositionally biased toward low complexity: residues M1–P12, A40–A56, and G130–A146. 2 disordered regions span residues M1–V73 and G85–K310. Basic and acidic residues predominate over residues T227 to V255. A phosphoserine mark is found at S265 and S269. Over residues S265–F281 the composition is skewed to acidic residues. Residues K310, K322, and K330 each participate in a glycyl lysine isopeptide (Lys-Gly) (interchain with G-Cter in SUMO2) cross-link. 9 consecutive MYM-type zinc fingers follow at residues Q334 to S368, H380 to V424, H431 to G466, K479 to L513, S523 to Y561, Y569 to V606, F614 to L648, K655 to E694, and W701 to I735. Polar residues predominate over residues N761–V789. Residues N761–N831 are disordered. Glycyl lysine isopeptide (Lys-Gly) (interchain with G-Cter in SUMO2) cross-links involve residues K780 and K788. The segment covering E790 to D799 has biased composition (basic and acidic residues). Residue T797 is modified to Phosphothreonine. K806 is covalently cross-linked (Glycyl lysine isopeptide (Lys-Gly) (interchain with G-Cter in SUMO2)). Over residues V816 to T827 the composition is skewed to pro residues. T818 and T827 each carry phosphothreonine. Residues K848, K862, K921, and K1276 each participate in a glycyl lysine isopeptide (Lys-Gly) (interchain with G-Cter in SUMO2) cross-link.

May be a component of a BHC histone deacetylase complex that contains HDAC1, HDAC2, HMG20B/BRAF35, KDM1A, RCOR1/CoREST, PHF21A/BHC80, ZMYM2, ZNF217, ZMYM3, GSE1 and GTF2I. In terms of tissue distribution, ubiquitously expressed in all embryonic stages and adult tissues.

The protein localises to the nucleus. Plays a role in the regulation of cell morphology and cytoskeletal organization. In Mus musculus (Mouse), this protein is Zinc finger MYM-type protein 3 (Zmym3).